Reading from the N-terminus, the 150-residue chain is Large ribosomal subunit protein bL9 (150 aa).

This sequence belongs to the bacterial ribosomal protein bL9 family.

Binds to the 23S rRNA. The sequence is that of Large ribosomal subunit protein bL9 from Yersinia enterocolitica serotype O:8 / biotype 1B (strain NCTC 13174 / 8081).